We begin with the raw amino-acid sequence, 277 residues long: Pantothenate synthetase (277 aa).

26 to 33 provides a ligand contact to ATP; that stretch reads MGNLHEGH. His-33 functions as the Proton donor in the catalytic mechanism. Gln-57 serves as a coordination point for (R)-pantoate. Residue Gln-57 coordinates beta-alanine. An ATP-binding site is contributed by 144–147; the sequence is GKKD. Gln-150 contributes to the (R)-pantoate binding site. Residues Val-173 and 181–184 each bind ATP; that span reads LSSR.

The protein belongs to the pantothenate synthetase family. As to quaternary structure, homodimer.

Its subcellular location is the cytoplasm. It catalyses the reaction (R)-pantoate + beta-alanine + ATP = (R)-pantothenate + AMP + diphosphate + H(+). It functions in the pathway cofactor biosynthesis; (R)-pantothenate biosynthesis; (R)-pantothenate from (R)-pantoate and beta-alanine: step 1/1. Its function is as follows. Catalyzes the condensation of pantoate with beta-alanine in an ATP-dependent reaction via a pantoyl-adenylate intermediate. This is Pantothenate synthetase from Paraburkholderia xenovorans (strain LB400).